The primary structure comprises 360 residues: Protein RecA (360 aa).

An ATP-binding site is contributed by glycine 66–threonine 73. Residues aspartate 330–lysine 360 form a disordered region.

Belongs to the RecA family.

The protein localises to the cytoplasm. Can catalyze the hydrolysis of ATP in the presence of single-stranded DNA, the ATP-dependent uptake of single-stranded DNA by duplex DNA, and the ATP-dependent hybridization of homologous single-stranded DNAs. It interacts with LexA causing its activation and leading to its autocatalytic cleavage. The sequence is that of Protein RecA from Lactobacillus johnsonii (strain CNCM I-12250 / La1 / NCC 533).